A 319-amino-acid chain; its full sequence is Vomeronasal type-1 receptor 96 (319 aa).

At 1–19 (MNKVNILPSDTNIKITLFS) the chain is on the extracellular side. Residues 20–40 (EVSVGISANSVLFFAHLCMFF) traverse the membrane as a helical segment. Topologically, residues 41-49 (EENRSKPID) are cytoplasmic. Residues 50–70 (LCIAFLSLTQLMLLVTMGLIA) form a helical membrane-spanning segment. Over 71–93 (ADMFMSQGIWDSTTCRSIIYFHR) the chain is Extracellular. A disulfide bridge connects residues C85 and C172. A helical transmembrane segment spans residues 94-114 (LLRGFNLCAACLLHILWTFTL). Residues 115 to 134 (SPRSSCLTKFKHKSPHHISC) lie on the Cytoplasmic side of the membrane. A helical membrane pass occupies residues 135 to 155 (AFFSLCVLYMLFSSHLFVLII). Residues 156-193 (ATSNLTSDHFMYVTQSCSILPMSYSRTTMFSLVMVTRE) lie on the Extracellular side of the membrane. A glycan (N-linked (GlcNAc...) asparagine) is linked at N159. Residues 194 to 214 (AFLISLMALFSGYMVTLLWRH) form a helical membrane-spanning segment. The Cytoplasmic segment spans residues 215–238 (KKQVQHLHSTSLSSKSSPQQRATR). Residues 239 to 259 (TILLLMSFFVVLYILDIVIFQ) form a helical membrane-spanning segment. Over 260–269 (SRTKFKDGSM) the chain is Extracellular. A helical membrane pass occupies residues 270–290 (FYSLHIIVSHSYATISPFVFI). Residues 291-319 (FSDKRIIKFLGSMSGRIINICLFSDGYGP) are Cytoplasmic-facing.

It belongs to the G-protein coupled receptor 1 family.

The protein resides in the cell membrane. Its function is as follows. Putative pheromone receptor implicated in the regulation of social as well as reproductive behavior. The sequence is that of Vomeronasal type-1 receptor 96 (Vom1r96) from Rattus norvegicus (Rat).